We begin with the raw amino-acid sequence, 142 residues long: MRHYEIVIMVHPDQSEQVPAMVERYTSSVNAGGGKVHRLEDWGRRHMAYPINKIHKAHYVLMNIECSQEVIDELMHNFRFNDAILRDLVIRRKDAVTEVSPIKAAESREQRAPRGEDRPARVVADDVDDSDDDTDDEDSNDE.

The disordered stretch occupies residues 103-142 (KAAESREQRAPRGEDRPARVVADDVDDSDDDTDDEDSNDE). Residues 105–124 (AESREQRAPRGEDRPARVVA) are compositionally biased toward basic and acidic residues. Acidic residues predominate over residues 125–142 (DDVDDSDDDTDDEDSNDE).

This sequence belongs to the bacterial ribosomal protein bS6 family.

Binds together with bS18 to 16S ribosomal RNA. In Hahella chejuensis (strain KCTC 2396), this protein is Small ribosomal subunit protein bS6.